The primary structure comprises 94 residues: Phosphoribosyl-ATP pyrophosphatase (94 aa).

The protein belongs to the PRA-PH family.

The protein resides in the cytoplasm. The catalysed reaction is 1-(5-phospho-beta-D-ribosyl)-ATP + H2O = 1-(5-phospho-beta-D-ribosyl)-5'-AMP + diphosphate + H(+). The protein operates within amino-acid biosynthesis; L-histidine biosynthesis; L-histidine from 5-phospho-alpha-D-ribose 1-diphosphate: step 2/9. In Pyrobaculum arsenaticum (strain DSM 13514 / JCM 11321 / PZ6), this protein is Phosphoribosyl-ATP pyrophosphatase.